We begin with the raw amino-acid sequence, 310 residues long: Apolipoprotein E (310 aa).

Positions 1 to 18 are cleaved as a signal peptide; that stretch reads MKVLWAALVVTLLAGCQA. Repeat copies occupy residues 77 to 98, 99 to 120, 121 to 142, 143 to 164, 165 to 186, 187 to 204, 205 to 226, and 227 to 248. The interval 77–248 is 8 X 22 AA approximate tandem repeats; sequence VLIEETMKEV…RLDEVREQVQ (172 aa). Methionine 140 carries the methionine sulfoxide modification. Residue serine 144 is modified to Phosphoserine. The interval 155–165 is LDL and other lipoprotein receptors binding; it reads HLRKLRKRLLR. 159-162 is a binding site for heparin; it reads LRKR. The interval 203 to 283 is lipid-binding and lipoprotein association; it reads AATVRSLVSK…SWFEPLVQDM (81 aa). A heparin-binding site is contributed by 222–229; that stretch reads GQRLRGRL. Positions 259–310 are homooligomerization; sequence NQMRLQAEAFHARLKSWFEPLVQDMQQRWAELVEKVQLAVGTSPTSESSEKQ. Residues 271–283 form a specificity for association with VLDL region; it reads RLKSWFEPLVQDM.

The protein belongs to the apolipoprotein A1/A4/E family. As to quaternary structure, homotetramer. May interact with ABCA1; functionally associated with ABCA1 in the biogenesis of HDLs. May interact with APP/A4 amyloid-beta peptide; the interaction is extremely stable in vitro but its physiological significance is unclear. May interact with MAPT. May interact with MAP2. In the cerebrospinal fluid, interacts with secreted SORL1. Interacts with PMEL; this allows the loading of PMEL luminal fragment on ILVs to induce fibril nucleation. APOE exists as multiple glycosylated and sialylated glycoforms within cells and in plasma. The extent of glycosylation and sialylation are tissue and context specific. Post-translationally, glycated in plasma VLDL. In terms of processing, phosphorylated by FAM20C in the extracellular medium.

It localises to the secreted. The protein localises to the extracellular space. It is found in the extracellular matrix. The protein resides in the extracellular vesicle. Its subcellular location is the endosome. It localises to the multivesicular body. In terms of biological role, APOE is an apolipoprotein, a protein associating with lipid particles, that mainly functions in lipoprotein-mediated lipid transport between organs via the plasma and interstitial fluids. APOE is a core component of plasma lipoproteins and is involved in their production, conversion and clearance. Apolipoproteins are amphipathic molecules that interact both with lipids of the lipoprotein particle core and the aqueous environment of the plasma. As such, APOE associates with chylomicrons, chylomicron remnants, very low density lipoproteins (VLDL) and intermediate density lipoproteins (IDL) but shows a preferential binding to high-density lipoproteins (HDL). It also binds a wide range of cellular receptors including the LDL receptor/LDLR, the LDL receptor-related proteins LRP1, LRP2 and LRP8 and the very low-density lipoprotein receptor/VLDLR that mediate the cellular uptake of the APOE-containing lipoprotein particles. Finally, APOE also has a heparin-binding activity and binds heparan-sulfate proteoglycans on the surface of cells, a property that supports the capture and the receptor-mediated uptake of APOE-containing lipoproteins by cells. A main function of APOE is to mediate lipoprotein clearance through the uptake of chylomicrons, VLDLs, and HDLs by hepatocytes. APOE is also involved in the biosynthesis by the liver of VLDLs as well as their uptake by peripheral tissues ensuring the delivery of triglycerides and energy storage in muscle, heart and adipose tissues. By participating in the lipoprotein-mediated distribution of lipids among tissues, APOE plays a critical role in plasma and tissues lipid homeostasis. APOE is also involved in two steps of reverse cholesterol transport, the HDLs-mediated transport of cholesterol from peripheral tissues to the liver, and thereby plays an important role in cholesterol homeostasis. First, it is functionally associated with ABCA1 in the biogenesis of HDLs in tissues. Second, it is enriched in circulating HDLs and mediates their uptake by hepatocytes. APOE also plays an important role in lipid transport in the central nervous system, regulating neuron survival and sprouting. This chain is Apolipoprotein E (APOE), found in Tapirus indicus (Asiatic tapir).